The chain runs to 204 residues: NAD(P)H dehydrogenase (quinone) FQR1 (204 aa).

Residues 5-192 (VYIVYYSMYG…QQAFHQGQYI (188 aa)) enclose the Flavodoxin-like domain. FMN-binding positions include 11-15 (SMYGH), 112-165 (IFYS…SPYG), and His-136. Residue Tyr-13 participates in NAD(+) binding.

The protein belongs to the WrbA family. It depends on FMN as a cofactor.

It localises to the cell membrane. The catalysed reaction is a quinone + NADH + H(+) = a quinol + NAD(+). It carries out the reaction a quinone + NADPH + H(+) = a quinol + NADP(+). In terms of biological role, catalyzes the transfer of electrons from NADH and NADPH to several quinones in vitro. May act as detoxification enzyme, and protect against auxin-induced oxidative stress. The sequence is that of NAD(P)H dehydrogenase (quinone) FQR1 from Arabidopsis thaliana (Mouse-ear cress).